A 149-amino-acid polypeptide reads, in one-letter code: Large-conductance mechanosensitive channel (149 aa).

A run of 2 helical transmembrane segments spans residues 14-34 (VVDMAVGIIVGGAFGKLVNTL) and 85-105 (GLFINAMISFIIMAFAVYLLV).

Belongs to the MscL family. As to quaternary structure, homopentamer.

It localises to the cell inner membrane. Channel that opens in response to stretch forces in the membrane lipid bilayer. May participate in the regulation of osmotic pressure changes within the cell. The polypeptide is Large-conductance mechanosensitive channel (Chlorobium phaeovibrioides (strain DSM 265 / 1930) (Prosthecochloris vibrioformis (strain DSM 265))).